The sequence spans 559 residues: MMEEFSYDHDFNTHFATDLDYLQHDQQQQQQQQHDQQHNQQQQPQPQPIQTQNLEHDHDQHTNDMSASSNASDSGPQRPKRTRAKGEALDVLKRKFEINPTPSLVERKKISDLIGMPEKNVRIWFQNRRAKLRKKQHGSNKDTIPSSQSRDIANDYDRGSTDNNLVTTTSTSSIFHDEDLTFFDRIPLNSNNNYYFFDICSITVGSWNRMKSGALQRRNFQSIKELRNLSPIKINNIMSNATDLMVLISKKNSEINYFFSAMANNTKILFRIFFPLSSVTNCSLTLETDDDIINSNNTSDKNNSNTNNDDDNDDNSNEDNDNSSEDKRNAKDNFGELKLTVTRSPTFAVYFLNNAPDEDPNLNNQWSICDDFSEGRQVNDAFVGGSNIPHTLKGLQKSLRFMNSLILDYKSSNEILPTINTAIPTAAVPQQNIAPPFLNTNSSATDSNPNTNLEDSLFFDHDLLSSSITNTNNGQGSNNGRQASKDDTLNLLDTTVNSNNNHNANNEENHLAQEHLSNDADIVANPNDHLLSLPTDSELPNTPDFLKNTNELTDEHRWI.

Disordered stretches follow at residues 16 to 88 (ATDL…KGEA), 132 to 158 (LRKK…DYDR), 293 to 333 (INSN…AKDN), and 534 to 559 (PTDS…HRWI). Composition is skewed to low complexity over residues 24-52 (HDQQ…IQTQ) and 63-74 (NDMSASSNASDS). Positions 77–136 (QRPKRTRAKGEALDVLKRKFEINPTPSLVERKKISDLIGMPEKNVRIWFQNRRAKLRKKQ) form a DNA-binding region, homeobox. Polar residues predominate over residues 141–151 (KDTIPSSQSRD). The segment covering 293–307 (INSNNTSDKNNSNTN) has biased composition (low complexity). Positions 308–323 (NDDDNDDNSNEDNDNS) are enriched in acidic residues. Basic and acidic residues predominate over residues 324–333 (SEDKRNAKDN). T542 is modified (phosphothreonine).

It is found in the nucleus. In terms of biological role, regulator in phosphate metabolism and acts as a derepressor of another central regulator PHO5. Binds to the upstream activator sequence (UAS) of PHO5. It also binds to the TRP4, HIS4, and CYC1 promoters. The polypeptide is Regulatory protein PHO2 (PHO2) (Saccharomyces cerevisiae (strain ATCC 204508 / S288c) (Baker's yeast)).